A 444-amino-acid chain; its full sequence is MLDINLLRKDLPSAIARLETRKSPQTFLNVEAFQTLEAERKAVQIRTEELQGQRGTLSKQIGQLKSKGEDASAVMALVSHSKAELESSAKRLEQIQTEMQALLLAVPNLPHDSVPQGIGEAGNVEVRKWSPFEGLGGEPAALSFEPRDHVDVGQPLGLDFELGTKLTGSRFTVMKGPLARLHRALSQFMLDVQTAEHGYTECYVPYIVNSDSLRGTGQLPKFEEDLFAARKGGQEGQAENAALYLIPTSEVPLTNFVRDEVVPEAQLPLKFTAHTPCFRSEAGSYGRDTRGMIRQHQFDKVEMVQVVHPEKSYEALEAMTGHAEVILQKLGLPYRVMLLCTGDMGFGATKTYDLEVWLPAQSTYREISSVSNCEAFQARRLQARFKNAQGKNEFVHTLNGSGLAVGRTLVAVLENYQRADGGVDIPAVLQPYMGGMTTLSLPAA.

248 to 250 (TSE) lines the L-serine pocket. 279–281 (RSE) serves as a coordination point for ATP. E302 provides a ligand contact to L-serine. Position 366 to 369 (366 to 369 (EISS)) interacts with ATP. S401 is an L-serine binding site.

It belongs to the class-II aminoacyl-tRNA synthetase family. Type-1 seryl-tRNA synthetase subfamily. In terms of assembly, homodimer. The tRNA molecule binds across the dimer.

The protein localises to the cytoplasm. It catalyses the reaction tRNA(Ser) + L-serine + ATP = L-seryl-tRNA(Ser) + AMP + diphosphate + H(+). The enzyme catalyses tRNA(Sec) + L-serine + ATP = L-seryl-tRNA(Sec) + AMP + diphosphate + H(+). Its pathway is aminoacyl-tRNA biosynthesis; selenocysteinyl-tRNA(Sec) biosynthesis; L-seryl-tRNA(Sec) from L-serine and tRNA(Sec): step 1/1. Functionally, catalyzes the attachment of serine to tRNA(Ser). Is also able to aminoacylate tRNA(Sec) with serine, to form the misacylated tRNA L-seryl-tRNA(Sec), which will be further converted into selenocysteinyl-tRNA(Sec). The chain is Serine--tRNA ligase from Polaromonas naphthalenivorans (strain CJ2).